An 85-amino-acid chain; its full sequence is Small ribosomal subunit protein bS18 (85 aa).

Positions 1-12 (MAFAQAGGGGGQ) are enriched in gly residues. Positions 1 to 22 (MAFAQAGGGGGQRRPFFRRRKT) are disordered.

It belongs to the bacterial ribosomal protein bS18 family. Part of the 30S ribosomal subunit. Forms a tight heterodimer with protein bS6.

Binds as a heterodimer with protein bS6 to the central domain of the 16S rRNA, where it helps stabilize the platform of the 30S subunit. The polypeptide is Small ribosomal subunit protein bS18 (Azorhizobium caulinodans (strain ATCC 43989 / DSM 5975 / JCM 20966 / LMG 6465 / NBRC 14845 / NCIMB 13405 / ORS 571)).